We begin with the raw amino-acid sequence, 220 residues long: Ripening-related protein grip22 (220 aa).

Residues 1 to 27 form the signal peptide; it reads MAKSALVWLASVCLVFNILSLPFLALG.

Belongs to the kiwellin family. In terms of tissue distribution, expressed in ripening fruits.

Its subcellular location is the secreted. In Vitis vinifera (Grape), this protein is Ripening-related protein grip22 (grip22).